A 370-amino-acid chain; its full sequence is Histidinol-phosphate aminotransferase 1 (370 aa).

An N6-(pyridoxal phosphate)lysine modification is found at lysine 222.

It belongs to the class-II pyridoxal-phosphate-dependent aminotransferase family. Histidinol-phosphate aminotransferase subfamily. In terms of assembly, homodimer. It depends on pyridoxal 5'-phosphate as a cofactor.

It carries out the reaction L-histidinol phosphate + 2-oxoglutarate = 3-(imidazol-4-yl)-2-oxopropyl phosphate + L-glutamate. It functions in the pathway amino-acid biosynthesis; L-histidine biosynthesis; L-histidine from 5-phospho-alpha-D-ribose 1-diphosphate: step 7/9. The polypeptide is Histidinol-phosphate aminotransferase 1 (Bacillus thuringiensis subsp. konkukian (strain 97-27)).